Reading from the N-terminus, the 400-residue chain is Na(+)/H(+) antiporter NhaA (400 aa).

12 helical membrane passes run 26 to 46 (AGGI…NSPL), 71 to 91 (LIHW…GMEV), 107 to 127 (IFPA…YWFI), 137 to 157 (GWAI…ALLS), 166 to 186 (IFLL…IALF), 189 to 209 (HGLS…LILL), 212 to 232 (FKVS…ASVL), 233 to 253 (KSGV…PLKG), 273 to 293 (FVIL…GIDV), 299 to 319 (PLLL…IFGF), 340 to 360 (IFAV…LASL), and 373 to 393 (LSRL…YLFL).

It belongs to the NhaA Na(+)/H(+) (TC 2.A.33) antiporter family.

It is found in the cell inner membrane. It catalyses the reaction Na(+)(in) + 2 H(+)(out) = Na(+)(out) + 2 H(+)(in). In terms of biological role, na(+)/H(+) antiporter that extrudes sodium in exchange for external protons. In Haemophilus influenzae (strain PittGG), this protein is Na(+)/H(+) antiporter NhaA.